The chain runs to 293 residues: Undecaprenyl-diphosphatase (293 aa).

6 helical membrane-spanning segments follow: residues 74 to 94 (VLVF…AGVF), 107 to 127 (WMII…KDLI), 134 to 154 (MWIT…AEKM), 209 to 229 (FLLA…DAFA), 243 to 263 (VGTL…MKFV), and 271 to 291 (FAAY…LGML).

The protein belongs to the UppP family.

It is found in the cell membrane. The enzyme catalyses di-trans,octa-cis-undecaprenyl diphosphate + H2O = di-trans,octa-cis-undecaprenyl phosphate + phosphate + H(+). Catalyzes the dephosphorylation of undecaprenyl diphosphate (UPP). Confers resistance to bacitracin. In Corynebacterium glutamicum (strain R), this protein is Undecaprenyl-diphosphatase.